The primary structure comprises 744 residues: Protein zyg-11 homolog B (744 aa).

LRR repeat units lie at residues 185–208 (LPRL…LACK), 216–236 (MHHL…VREL), and 237–261 (KHLN…LLEQ).

The protein belongs to the zyg-11 family. As to quaternary structure, (Microbial infection) Interacts with SARS-COV-2 protein ORF10. Interacts with ELOC/Elongin C. Part of an E3 ubiquitin ligase complex including ZYG11B, CUL2 and Elongin BC. (Microbial infection) Ubiquitinated; leading to proteasomal degradation in the presence of herpes simplex virus 1/HHV-1.

It localises to the cytoplasm. Its function is as follows. Serves as substrate adapter subunit in the E3 ubiquitin ligase complex ZYG11B-CUL2-Elongin BC. Acts to target substrates bearing N-terminal degrons for proteasomal degradation with the first four residues of substrates being the key recognition elements. Prefers Nt-Gly but also has the capacity to recognize Nt-Ser, -Ala and -Cys. Involved in the clearance of proteolytic fragments generated by caspase cleavage during apoptosis since N-terminal glycine degrons are strongly enriched at caspase cleavage sites. Also important in the quality control of protein N-myristoylation in which N-terminal glycine degrons are conditionally exposed after a failure of N-myristoylation. In addition, plays a role in the amplification of cGAS to enhance innate immune response. Mechanistically, strengthens the processes of cGAS binding with dsDNA and assembling oligomers and also accelerates and stabilizes cGAS-DNA condensation, thereby enhancing production of antiviral IFNs and inflammatory cytokines. This Homo sapiens (Human) protein is Protein zyg-11 homolog B.